We begin with the raw amino-acid sequence, 304 residues long: Acetylglutamate kinase (304 aa).

Substrate contacts are provided by residues G77–G78, R99, and N201.

This sequence belongs to the acetylglutamate kinase family. ArgB subfamily.

It is found in the cytoplasm. It carries out the reaction N-acetyl-L-glutamate + ATP = N-acetyl-L-glutamyl 5-phosphate + ADP. It functions in the pathway amino-acid biosynthesis; L-arginine biosynthesis; N(2)-acetyl-L-ornithine from L-glutamate: step 2/4. In terms of biological role, catalyzes the ATP-dependent phosphorylation of N-acetyl-L-glutamate. This Methylibium petroleiphilum (strain ATCC BAA-1232 / LMG 22953 / PM1) protein is Acetylglutamate kinase.